We begin with the raw amino-acid sequence, 358 residues long: 3'(2'),5'-bisphosphate nucleotidase (358 aa).

The active-site Proton acceptor is the Asp-52. Residues Glu-78, Asp-140, Ile-142, and Asp-143 each contribute to the Mg(2+) site. The Proton acceptor role is filled by Thr-145. The adenosine 3',5'-bisphosphate site is built by Thr-145, His-239, Ser-263, Lys-266, Arg-280, and Asp-292. His-239, Ser-263, Lys-266, Arg-280, and Asp-292 together coordinate AMP. Asp-292 contributes to the Mg(2+) binding site.

It belongs to the inositol monophosphatase superfamily. Mg(2+) serves as cofactor. Is constitutively transcribed in both roots and shoots.

It catalyses the reaction 3'-phosphoadenylyl sulfate + H2O = adenosine 5'-phosphosulfate + phosphate. The enzyme catalyses adenosine 3',5'-bisphosphate + H2O = AMP + phosphate. It carries out the reaction adenosine 2',5'-bisphosphate + H2O = AMP + phosphate. Its activity is regulated as follows. Inhibited by Ca(2+), Li(+), and Na(+) and activated by K(+). Its function is as follows. Phosphatase that converts adenosine 3'-phosphate 5'-phosphosulfate (PAPS) to adenosine 5'-phosphosulfate (APS) and 3'(2')-phosphoadenosine 5'-phosphate (PAP) to AMP. May regulate the flux of sulfur in the sulfur-activation pathway by converting PAPS to APS. Shows no activity on myo-inositol 1-phosphate, beta-glycerol phosphate, NADPH, NADP and 5'-AMP. The polypeptide is 3'(2'),5'-bisphosphate nucleotidase (Oryza sativa (Rice)).